The chain runs to 246 residues: Phosphate import ATP-binding protein PstB (246 aa).

In terms of domain architecture, ABC transporter spans 3-241 (AKTTNLNLFY…PKQEKTKAYL (239 aa)). 35 to 42 (GASGCGKS) serves as a coordination point for ATP.

The protein belongs to the ABC transporter superfamily. Phosphate importer (TC 3.A.1.7) family. In terms of assembly, the complex is composed of two ATP-binding proteins (PstB), two transmembrane proteins (PstC and PstA) and a solute-binding protein (PstS).

The protein resides in the cell inner membrane. The enzyme catalyses phosphate(out) + ATP + H2O = ADP + 2 phosphate(in) + H(+). Part of the ABC transporter complex PstSACB involved in phosphate import. Responsible for energy coupling to the transport system. The sequence is that of Phosphate import ATP-binding protein PstB from Campylobacter jejuni subsp. jejuni serotype O:2 (strain ATCC 700819 / NCTC 11168).